Here is a 107-residue protein sequence, read N- to C-terminus: Insulin (107 aa).

The first 24 residues, 1–24, serve as a signal peptide directing secretion; it reads MALWIRSLPLLALLVFSGPGTSYA. Cystine bridges form between Cys-31-Cys-93, Cys-43-Cys-106, and Cys-92-Cys-97. A propeptide spans 57–84 (c peptide); it reads DVEQPLVSSPLRGEAGVLPFQQEEYEKV.

Belongs to the insulin family. As to quaternary structure, heterodimer of a B chain and an A chain linked by two disulfide bonds.

The protein resides in the secreted. Functionally, insulin decreases blood glucose concentration. It increases cell permeability to monosaccharides, amino acids and fatty acids. It accelerates glycolysis, the pentose phosphate cycle, and glycogen synthesis in liver. In Gallus gallus (Chicken), this protein is Insulin (INS).